The primary structure comprises 692 residues: Structure-specific endonuclease subunit SLX4 (692 aa).

A disordered region spans residues 39–59 (SDDEDQDEEQETEIPPEEGDD).

Belongs to the SLX4 family. In terms of assembly, forms a heterodimer with SLX1. Post-translationally, phosphorylated in response to DNA damage.

It is found in the nucleus. Its function is as follows. Regulatory subunit of the SLX1-SLX4 structure-specific endonuclease that resolves DNA secondary structures generated during DNA repair and recombination. Has endonuclease activity towards branched DNA substrates, introducing single-strand cuts in duplex DNA close to junctions with ss-DNA. The sequence is that of Structure-specific endonuclease subunit SLX4 from Kluyveromyces lactis (strain ATCC 8585 / CBS 2359 / DSM 70799 / NBRC 1267 / NRRL Y-1140 / WM37) (Yeast).